The primary structure comprises 106 residues: Large ribosomal subunit protein eL30 (106 aa).

It belongs to the eukaryotic ribosomal protein eL30 family.

This is Large ribosomal subunit protein eL30 from Methanococcus maripaludis (strain C7 / ATCC BAA-1331).